Consider the following 55-residue polypeptide: Large ribosomal subunit protein bL33c (55 aa).

The protein belongs to the bacterial ribosomal protein bL33 family.

The protein localises to the plastid. It localises to the chloroplast. The sequence is that of Large ribosomal subunit protein bL33c from Emiliania huxleyi (Coccolithophore).